Reading from the N-terminus, the 334-residue chain is Fructose-1,6-bisphosphatase class 1 (334 aa).

Mg(2+) contacts are provided by Glu-90, Asp-113, Leu-115, and Asp-116. Substrate contacts are provided by residues 116-119 (DGSS), Asn-209, Tyr-242, and Lys-272. Glu-278 lines the Mg(2+) pocket.

It belongs to the FBPase class 1 family. Homotetramer. Mg(2+) serves as cofactor.

The protein resides in the cytoplasm. It carries out the reaction beta-D-fructose 1,6-bisphosphate + H2O = beta-D-fructose 6-phosphate + phosphate. Its pathway is carbohydrate biosynthesis; gluconeogenesis. This chain is Fructose-1,6-bisphosphatase class 1, found in Actinobacillus pleuropneumoniae serotype 7 (strain AP76).